The chain runs to 1250 residues: MHPDLGPLWTLLYVLVILCSSVSSDLAPYFISEPLSAVQKLGRPVVLHCSAKPVTARISWLHNGKRLDRNTEQIKIHRGTLTILSLNPSLSGCYQCVANNSVGAVVSGPATVSAAALGDFDSSTMHVITAEEKNTGFIGCRVPESNPKAEVRYKIRGKWLKHSTGNYIILPSGNLQVLNVSSKDKGSYKCAAYNPVTSELKVEPTGRKLLVSRPSSNGFHILHPALSQALAVLPHSPVTLECVVSGVPASQVYWLKDGQDAVAGSNWRRLYSHLATASIDPADSGNYSCVVGNKSGDVKHVTYMVNVLEHASISKGLHDQKVSLGATVHFTCDVHGNPAPNRTWFHNAQPIHPSSRHLTEGNVLKITRVVMEDSGLYQCVADNGIGFMQSTGRLQIEQDSGWKPVIVTAPANIEVMDGDFVTLSCNATGVPVPVIHWYGRHGLITSHPSQVLRSKPRKSHLFRPGDLDLEPVYLIMSQAGSSSLSIQAVTLEHAGKYTCEATNKHGSTQSEAFLTVVPFETNTKAESVTPSEASQNDERDPQDGSESSLLNLFPVKVHPSGVELPAERNASVPDAPNILSPPQTHMPDTYNLVWRAGRDGGMPINAYFVKYRKLDDGSGAVGSWHTVRVPGSENELHLTELEPSSLYEVLMVARSAVGEGQPAMLTFRTSKEKMASSKNTQASFPPVGVPKRPVTAEASNSNFGVVLTDSSRHSGVPEAPDRPTISMASETSVYVTWIPRANGGSPITAFKVEYKRMRTSDWLVAAEDIPPSKLSVEVRSLEPGSIYKFRVIAINHYGESFRSSASRPYQVAGFPNRFSNRPITGPHIAYTEAVSDTQIMLKWTYVPSSNNNTPIQGFYIYYRPTDSDNDSDYKRDVVEGSKQWHTIGHLQPETSYDIKMQCFNEGGESEFSNVMICETKVKRVPGASDYPVKELSTPPSSSGNAGNVGPATSPARSSDMLYLIVGCVLGVMVLILMVFIALCLWKSRQQSTIQKYDPPGYLYQGSEINGQMVEYTTLSGAARINGSVHGGFLSNGCSHLHHKGPSGVNGTLSGNINGGLYSAHTNSLTRACVEFEHPHHLVNSGGVYTAVPQMDPLECINCRNCRNNNRCFTKTNSPLPVVPVVASYPQGGLEMKPLNAMKVPVCPASTVPDHGQLPDDCVKDSVAPIPTQHTCCQDNISDINSDSTEDTAEFSRGDSSGHSEAEDKVFSWNPLILSPVLEDCGEKTARSPPGPPLDGLSVVLQQAQET.

Positions 1-24 (MHPDLGPLWTLLYVLVILCSSVSS) are cleaved as a signal peptide. The Extracellular segment spans residues 25–962 (DLAPYFISEP…SPARSSDMLY (938 aa)). Ig-like C2-type domains are found at residues 28-113 (PYFI…ATVS), 119-203 (DFDS…LKVE), 224-302 (PALS…KHVT), 309-395 (EHAS…GRLQ), and 404-515 (PVIV…AFLT). Residues cysteine 49 and cysteine 96 are joined by a disulfide bond. N-linked (GlcNAc...) asparagine glycans are attached at residues asparagine 99, asparagine 179, asparagine 286, asparagine 293, asparagine 341, and asparagine 426. Cystine bridges form between cysteine 140–cysteine 190 and cysteine 242–cysteine 289. 2 cysteine pairs are disulfide-bonded: cysteine 332-cysteine 379 and cysteine 425-cysteine 499. Over residues 524–534 (KAESVTPSEAS) the composition is skewed to polar residues. A disordered region spans residues 524–547 (KAESVTPSEASQNDERDPQDGSES). The N-linked (GlcNAc...) asparagine glycan is linked to asparagine 569. 3 Fibronectin type-III domains span residues 572–673 (VPDA…SKEK), 719–814 (APDR…VAGF), and 822–922 (PITG…TKVK). N-linked (GlcNAc...) asparagine glycosylation occurs at asparagine 869. The tract at residues 929–951 (DYPVKELSTPPSSSGNAGNVGPA) is disordered. The chain crosses the membrane as a helical span at residues 963-983 (LIVGCVLGVMVLILMVFIALC). The Cytoplasmic segment spans residues 984–1250 (LWKSRQQSTI…SVVLQQAQET (267 aa)). Disordered stretches follow at residues 1178 to 1208 (DNIS…AEDK) and 1223 to 1250 (DCGE…AQET). The span at 1193 to 1208 (EFSRGDSSGHSEAEDK) shows a compositional bias: basic and acidic residues.

In terms of assembly, part of a complex that contains BOC, CDON, NEO1, cadherins and CTNNB1. Interacts with NTN3. Interacts with DHH, IHH and SHH. N-glycosylated. Highly expressed in somites and the dorsal lips of the neural tube during embryogenesis. Detected at very low levels in adult tissues.

It localises to the cell membrane. In terms of biological role, component of a cell-surface receptor complex that mediates cell-cell interactions between muscle precursor cells. Promotes differentiation of myogenic cells. Required for response to NTN3 and activation of NFATC3. In Mus musculus (Mouse), this protein is Cell adhesion molecule-related/down-regulated by oncogenes (Cdon).